The sequence spans 199 residues: NAD(P)H dehydrogenase (quinone) (199 aa).

The 187-residue stretch at 4 to 190 (VLVLYYSAYG…AGARYQGRVI (187 aa)) folds into the Flavodoxin-like domain. Residues 10–15 (SAYGHI) and 78–80 (TRF) contribute to the FMN site. Residue tyrosine 12 coordinates NAD(+). Substrate is bound at residue tryptophan 98. FMN-binding positions include 113–119 (STATQHG) and histidine 134.

Belongs to the WrbA family. It depends on FMN as a cofactor.

The enzyme catalyses a quinone + NADH + H(+) = a quinol + NAD(+). It catalyses the reaction a quinone + NADPH + H(+) = a quinol + NADP(+). This Bradyrhizobium sp. (strain BTAi1 / ATCC BAA-1182) protein is NAD(P)H dehydrogenase (quinone).